A 198-amino-acid chain; its full sequence is Recombination protein RecR (198 aa).

A C4-type zinc finger spans residues 57 to 72; it reads CSVCGHITDKDPCYIC. A Toprim domain is found at 80-175; it reads SVLCVVQESK…KVTRIAHGLP (96 aa).

It belongs to the RecR family.

In terms of biological role, may play a role in DNA repair. It seems to be involved in an RecBC-independent recombinational process of DNA repair. It may act with RecF and RecO. The sequence is that of Recombination protein RecR from Listeria innocua serovar 6a (strain ATCC BAA-680 / CLIP 11262).